The primary structure comprises 286 residues: E3 SUMO-protein ligase K-bZIP (286 aa).

Disordered regions lie at residues 1–22 (MPRM…EKDE) and 106–130 (WTLS…SKRR).

In terms of assembly, interacts with host HDAC1 and HDAC2, these interactions suppress HDAC activities. Interacts with protein ORF57. Interacts with protein vPK. In terms of processing, sumoylated.

Its pathway is protein modification; protein sumoylation. SUMO E3 ligase that plays a role in viral gene regulation and is essential for viral reactivation. Disrupts host G1 cell cycle control thus allowing viral transcription and translation to proceed at the early stages of infection. Catalyzes its own SUMO modification as well as that of its interacting partners such as host TP53 and RB1. Regulates viral gene expression and reactivation and may mediate the SUMOylation of viral promoters in the low methylated 'Lys-9' histone H3 (H3K9me) region which results in a diminution of viral gene expression after reactivation. SUMOylates also host histone lysine demethylase 4A/KDM4A, an essential step for complete enrichment of SUMO-2/3 on the viral genome during viral transactivation and reactivation. This Human herpesvirus 8 type P (isolate GK18) (HHV-8) protein is E3 SUMO-protein ligase K-bZIP (K8).